A 357-amino-acid chain; its full sequence is Anthranilate phosphoribosyltransferase (357 aa).

5-phospho-alpha-D-ribose 1-diphosphate is bound by residues G91, 94 to 95 (GD), T99, 101 to 104 (NIST), 119 to 127 (KHGNRSVSS), and S131. G91 is an anthranilate binding site. S103 lines the Mg(2+) pocket. N122 is a binding site for anthranilate. Anthranilate is bound at residue R177. Residues D235 and E236 each contribute to the Mg(2+) site.

The protein belongs to the anthranilate phosphoribosyltransferase family. Homodimer. The cofactor is Mg(2+).

The catalysed reaction is N-(5-phospho-beta-D-ribosyl)anthranilate + diphosphate = 5-phospho-alpha-D-ribose 1-diphosphate + anthranilate. It participates in amino-acid biosynthesis; L-tryptophan biosynthesis; L-tryptophan from chorismate: step 2/5. Catalyzes the transfer of the phosphoribosyl group of 5-phosphorylribose-1-pyrophosphate (PRPP) to anthranilate to yield N-(5'-phosphoribosyl)-anthranilate (PRA). The protein is Anthranilate phosphoribosyltransferase of Shewanella baltica (strain OS195).